The sequence spans 396 residues: Mitogen-activated protein kinase mpkC (396 aa).

Residues 20–299 (YSDLQPVGLG…AAKALEHPYL (280 aa)) enclose the Protein kinase domain. ATP contacts are provided by residues 26–34 (VGLGAFGLV) and Lys-49. Asp-141 functions as the Proton acceptor in the catalytic mechanism. Position 171 is a phosphothreonine (Thr-171). Positions 171 to 173 (TGY) match the TXY motif. Tyr-173 bears the Phosphotyrosine mark.

The protein belongs to the protein kinase superfamily. Ser/Thr protein kinase family. MAP kinase subfamily. HOG1 sub-subfamily. Mg(2+) is required as a cofactor. Dually phosphorylated on Thr-171 and Tyr-173, which activates the enzyme.

It carries out the reaction L-seryl-[protein] + ATP = O-phospho-L-seryl-[protein] + ADP + H(+). The catalysed reaction is L-threonyl-[protein] + ATP = O-phospho-L-threonyl-[protein] + ADP + H(+). With respect to regulation, activated by tyrosine and threonine phosphorylation. In terms of biological role, mitogen-activated protein kinase required for growth on media where sorbitol or mannitol is the sole carbon source. This is Mitogen-activated protein kinase mpkC (mpkC) from Aspergillus niger (strain ATCC MYA-4892 / CBS 513.88 / FGSC A1513).